The sequence spans 339 residues: 3-isopropylmalate dehydrogenase (339 aa).

4 residues coordinate substrate: Arg-87, Arg-97, Arg-124, and Asp-214. Mg(2+) contacts are provided by Asp-214, Asp-238, and Asp-242. 274 to 286 is a binding site for NAD(+); the sequence is GSAPDIAGQGIAD.

It belongs to the isocitrate and isopropylmalate dehydrogenases family. LeuB type 2 subfamily. In terms of assembly, homodimer. Mg(2+) serves as cofactor. Requires Mn(2+) as cofactor.

It localises to the cytoplasm. The enzyme catalyses (2R,3S)-3-isopropylmalate + NAD(+) = 4-methyl-2-oxopentanoate + CO2 + NADH. It functions in the pathway amino-acid biosynthesis; L-leucine biosynthesis; L-leucine from 3-methyl-2-oxobutanoate: step 3/4. In terms of biological role, catalyzes the oxidation of 3-carboxy-2-hydroxy-4-methylpentanoate (3-isopropylmalate) to 3-carboxy-4-methyl-2-oxopentanoate. The product decarboxylates to 4-methyl-2 oxopentanoate. The protein is 3-isopropylmalate dehydrogenase of Mycobacterium marinum (strain ATCC BAA-535 / M).